The chain runs to 276 residues: CTD small phosphatase-like protein (276 aa).

Positions Met1–Glu25 are disordered. One can recognise an FCP1 homology domain in the interval Leu102–Leu260. Asp112 serves as the catalytic 4-aspartylphosphate intermediate. Residues Asp112, Asp114, and Asn223 each contribute to the Mg(2+) site. The active-site Proton donor is the Asp114.

Interacts with REST. Monomer. It depends on Mg(2+) as a cofactor. As to expression, expression is restricted to non-neuronal tissues.

The protein resides in the nucleus. The catalysed reaction is O-phospho-L-seryl-[protein] + H2O = L-seryl-[protein] + phosphate. It catalyses the reaction O-phospho-L-threonyl-[protein] + H2O = L-threonyl-[protein] + phosphate. Recruited by REST to neuronal genes that contain RE-1 elements, leading to neuronal gene silencing in non-neuronal cells. Preferentially catalyzes the dephosphorylation of 'Ser-5' within the tandem 7 residue repeats in the C-terminal domain (CTD) of the largest RNA polymerase II subunit POLR2A. Negatively regulates RNA polymerase II transcription, possibly by controlling the transition from initiation/capping to processive transcript elongation. The chain is CTD small phosphatase-like protein (CTDSPL) from Homo sapiens (Human).